The primary structure comprises 106 residues: Small ribosomal subunit protein bS20 (106 aa).

Basic residues predominate over residues 1-32 (MAQKKPKRNLSALKRHRQSLKRRLRNKAKKSA). A disordered region spans residues 1-33 (MAQKKPKRNLSALKRHRQSLKRRLRNKAKKSAI).

It belongs to the bacterial ribosomal protein bS20 family.

Binds directly to 16S ribosomal RNA. The chain is Small ribosomal subunit protein bS20 (rpsT) from Thermus thermophilus (strain ATCC BAA-163 / DSM 7039 / HB27).